The sequence spans 87 residues: Small ribosomal subunit protein bS20 (87 aa).

The disordered stretch occupies residues 1–22 (MANIKSQIKRIGTNKKAQERNK).

This sequence belongs to the bacterial ribosomal protein bS20 family.

Its function is as follows. Binds directly to 16S ribosomal RNA. The polypeptide is Small ribosomal subunit protein bS20 (Clavibacter sepedonicus (Clavibacter michiganensis subsp. sepedonicus)).